A 722-amino-acid chain; its full sequence is Zinc finger protein 219 (722 aa).

Residues 1–21 (MEGSRPRAPSGHLAPSPPAFD) form a disordered region. The residue at position 16 (S16) is a Phosphoserine. 2 C2H2-type zinc fingers span residues 57–79 (FPCP…LRAH) and 85–107 (FQCP…LRTH). Positions 137–160 (ARSSGGMQATPATEGLARPQAPSS) are disordered. 2 C2H2-type zinc fingers span residues 163–186 (FRCP…HILH) and 189–212 (WKCG…LTAH). The tract at residues 215-275 (PERPLAATSA…EEPPAPPEFR (61 aa)) is disordered. 2 stretches are compositionally biased toward pro residues: residues 225–247 (APPP…PQPE) and 259–272 (TPAP…PAPP). 2 consecutive C2H2-type zinc fingers follow at residues 274–296 (FRCQ…MRKH) and 302–324 (HACP…MKVH). The segment at 384 to 495 (LRAGEGRPNG…GTRPEGGRGA (112 aa)) is disordered. Residues 390–404 (RPNGEGAEPGPGRSF) show a composition bias toward gly residues. The span at 425–438 (EPEEEEEVVEAEEE) shows a compositional bias: acidic residues. Residues 463–477 (SASAAGAQARSTATQ) are compositionally biased toward low complexity. 2 C2H2-type zinc fingers span residues 498-520 (KDCP…LRVH) and 526-548 (YKCP…LQRH). Disordered regions lie at residues 542 to 648 (KYHL…LHRC) and 668 to 722 (HHSR…GQER). The span at 558-568 (PGPPPEPPPPS) shows a compositional bias: pro residues. The span at 634-643 (GPGGEAGPGG) shows a compositional bias: gly residues. A C2H2-type 9 zinc finger spans residues 646–668 (HRCLFCPFATGAPELMALHLQVH). Over residues 668-677 (HHSRRARGRR) the composition is skewed to basic residues. S692 carries the post-translational modification Phosphoserine. T695 carries the phosphothreonine modification. S698 carries the post-translational modification Phosphoserine.

This sequence belongs to the krueppel C2H2-type zinc-finger protein family. In terms of assembly, interacts with SOX9 (via C-terminus). In terms of tissue distribution, ubiquitous.

It is found in the nucleus. Functionally, transcriptional regulator. Recognizes and binds 2 copies of the core DNA sequence motif 5'-GGGGG-3'. Binds to the HMGN1 promoter and may repress HMGN1 expression. Regulates SNCA expression in primary cortical neurons. Binds to the COL2A1 promoter and activates COL2A1 expression, as part of a complex with SOX9. Plays a role in chondrocyte differentiation. In Homo sapiens (Human), this protein is Zinc finger protein 219 (ZNF219).